A 499-amino-acid chain; its full sequence is Alpha-L-arabinofuranosidase B (499 aa).

Residues 1–17 (MFSRRNLLALGLAATVS) form the signal peptide. Positions 18–335 (AGPCDIYEAG…ENIVAAKYVV (318 aa)) are catalytic. 3 disulfides stabilise this stretch: cysteine 21–cysteine 31, cysteine 81–cysteine 86, and cysteine 176–cysteine 177. Asparagine 83 is a glycosylation site (N-linked (GlcNAc...) asparagine). The N-linked (GlcNAc...) asparagine glycan is linked to asparagine 202. Aspartate 219 contacts substrate. Glutamate 221 acts as the Nucleophile in catalysis. Residues asparagine 222, asparagine 223, and glycine 296 each contribute to the substrate site. Aspartate 297 (proton donor) is an active-site residue. Residues 336 to 499 (GSLVSGPSFT…SFEIETAFAS (164 aa)) are ABD. Residues cysteine 401 and cysteine 439 are joined by a disulfide bond. Residues histidine 416, asparagine 418, phenylalanine 419, aspartate 435, histidine 463, glutamate 465, leucine 468, and aspartate 488 each contribute to the substrate site.

It belongs to the glycosyl hydrolase 54 family.

It is found in the secreted. The catalysed reaction is Hydrolysis of terminal non-reducing alpha-L-arabinofuranoside residues in alpha-L-arabinosides.. It functions in the pathway glycan metabolism; L-arabinan degradation. In terms of biological role, alpha-L-arabinofuranosidase involved in the degradation of arabinoxylan, a major component of plant hemicellulose. Able to hydrolyze 1,5-, 1,3- and 1,2-alpha-linkages not only in L-arabinofuranosyl oligosaccharides, but also in polysaccharides containing terminal non-reducing L-arabinofuranoses in side chains, like L-arabinan, arabinogalactan and arabinoxylan. This is Alpha-L-arabinofuranosidase B (abfB) from Aspergillus kawachii (strain NBRC 4308) (White koji mold).